The chain runs to 309 residues: Mitochondrial import receptor subunit TOM34 (309 aa).

3 TPR repeats span residues 9 to 42 (VEEL…LQAQ), 51 to 84 (SVLY…VPFS), and 86 to 118 (KPLL…DDSV). At Ser-160 the chain carries Phosphoserine. Residues 161–189 (LPSENHKEMAKSKSKETTATKNRVPSAGD) are disordered. The segment covering 164–178 (ENHKEMAKSKSKETT) has biased composition (basic and acidic residues). At Ser-186 the chain carries Phosphoserine. TPR repeat units lie at residues 193–226 (AKVL…SNLE), 227–260 (SATY…DGKN), and 262–294 (KAFY…EPRN). Residue Lys-197 forms a Glycyl lysine isopeptide (Lys-Gly) (interchain with G-Cter in SUMO2) linkage.

It belongs to the Tom34 family. In terms of assembly, interacts with HSP90A, VCP, ATP6V1D, KIAA0665, AMPK, and DMAP1 through its TPR repeat.

The protein resides in the cytoplasm. The protein localises to the mitochondrion outer membrane. Its function is as follows. Plays a role in the import of cytosolically synthesized preproteins into mitochondria. Binds the mature portion of precursor proteins. Interacts with cellular components, and possesses weak ATPase activity. May be a chaperone-like protein that helps to keep newly synthesized precursors in an unfolded import compatible state. The protein is Mitochondrial import receptor subunit TOM34 (TOMM34) of Pongo abelii (Sumatran orangutan).